The sequence spans 343 residues: Phenylalanine--tRNA ligase alpha subunit (343 aa).

E256 contributes to the Mg(2+) binding site.

It belongs to the class-II aminoacyl-tRNA synthetase family. Phe-tRNA synthetase alpha subunit type 1 subfamily. As to quaternary structure, tetramer of two alpha and two beta subunits. Mg(2+) is required as a cofactor.

It is found in the cytoplasm. The catalysed reaction is tRNA(Phe) + L-phenylalanine + ATP = L-phenylalanyl-tRNA(Phe) + AMP + diphosphate + H(+). The chain is Phenylalanine--tRNA ligase alpha subunit from Phytoplasma australiense.